The chain runs to 466 residues: Methylenetetrahydrofolate--tRNA-(uracil-5-)-methyltransferase TrmFO (466 aa).

16 to 21 (GGGMAG) is an FAD binding site.

This sequence belongs to the MnmG family. TrmFO subfamily. FAD is required as a cofactor.

It localises to the cytoplasm. It carries out the reaction uridine(54) in tRNA + (6R)-5,10-methylene-5,6,7,8-tetrahydrofolate + NADH + H(+) = 5-methyluridine(54) in tRNA + (6S)-5,6,7,8-tetrahydrofolate + NAD(+). The catalysed reaction is uridine(54) in tRNA + (6R)-5,10-methylene-5,6,7,8-tetrahydrofolate + NADPH + H(+) = 5-methyluridine(54) in tRNA + (6S)-5,6,7,8-tetrahydrofolate + NADP(+). Functionally, catalyzes the folate-dependent formation of 5-methyl-uridine at position 54 (M-5-U54) in all tRNAs. In Maricaulis maris (strain MCS10) (Caulobacter maris), this protein is Methylenetetrahydrofolate--tRNA-(uracil-5-)-methyltransferase TrmFO.